We begin with the raw amino-acid sequence, 215 residues long: 3-isopropylmalate dehydratase small subunit (215 aa).

This sequence belongs to the LeuD family. LeuD type 1 subfamily. As to quaternary structure, heterodimer of LeuC and LeuD.

It catalyses the reaction (2R,3S)-3-isopropylmalate = (2S)-2-isopropylmalate. It participates in amino-acid biosynthesis; L-leucine biosynthesis; L-leucine from 3-methyl-2-oxobutanoate: step 2/4. In terms of biological role, catalyzes the isomerization between 2-isopropylmalate and 3-isopropylmalate, via the formation of 2-isopropylmaleate. The protein is 3-isopropylmalate dehydratase small subunit of Xanthomonas euvesicatoria pv. vesicatoria (strain 85-10) (Xanthomonas campestris pv. vesicatoria).